A 320-amino-acid polypeptide reads, in one-letter code: Glutathione synthetase (320 aa).

The 186-residue stretch at 130-315 (KIFTSWFPDL…ITGMLLDYIE (186 aa)) folds into the ATP-grasp domain. 156-212 (WEKYQDIIIKPLDAMGGANIFRIKKNDPNFSVIVENMTNYERKYCMVQNYLPEIKLG) contacts ATP. Mg(2+)-binding residues include Glu-286 and Asn-288.

Belongs to the prokaryotic GSH synthase family. Mg(2+) is required as a cofactor. It depends on Mn(2+) as a cofactor.

It catalyses the reaction gamma-L-glutamyl-L-cysteine + glycine + ATP = glutathione + ADP + phosphate + H(+). Its pathway is sulfur metabolism; glutathione biosynthesis; glutathione from L-cysteine and L-glutamate: step 2/2. The chain is Glutathione synthetase from Buchnera aphidicola subsp. Acyrthosiphon pisum (strain APS) (Acyrthosiphon pisum symbiotic bacterium).